Here is a 512-residue protein sequence, read N- to C-terminus: D-alanine--D-alanyl carrier protein ligase (512 aa).

An ATP-binding site is contributed by 152-153; sequence TS. Residue Asp-199 coordinates D-alanine. ATP is bound at residue 294-299; the sequence is NAYGPT. Val-303 is a D-alanine binding site. Residues Asp-385, 397–400, and Lys-499 contribute to the ATP site; that span reads YGGR. Residue Lys-499 coordinates D-alanine.

The protein belongs to the ATP-dependent AMP-binding enzyme family. DltA subfamily.

It is found in the cytoplasm. The enzyme catalyses holo-[D-alanyl-carrier protein] + D-alanine + ATP = D-alanyl-[D-alanyl-carrier protein] + AMP + diphosphate. It participates in cell wall biogenesis; lipoteichoic acid biosynthesis. Functionally, catalyzes the first step in the D-alanylation of lipoteichoic acid (LTA), the activation of D-alanine and its transfer onto the D-alanyl carrier protein (Dcp) DltC. In an ATP-dependent two-step reaction, forms a high energy D-alanyl-AMP intermediate, followed by transfer of the D-alanyl residue as a thiol ester to the phosphopantheinyl prosthetic group of the Dcp. D-alanylation of LTA plays an important role in modulating the properties of the cell wall in Gram-positive bacteria, influencing the net charge of the cell wall. The polypeptide is D-alanine--D-alanyl carrier protein ligase (Streptococcus pyogenes serotype M3 (strain SSI-1)).